The following is a 170-amino-acid chain: Cytochrome bc1 complex Rieske iron-sulfur subunit (170 aa).

The Rieske domain occupies Lys-63 to Glu-153. 4 residues coordinate [2Fe-2S] cluster: Cys-96, His-98, Cys-115, and His-118. An intrachain disulfide couples Cys-101 to Cys-117.

The cytochrome bc1 complex is composed of a cytochrome b (QcrB), the Rieske iron-sulfur protein (QcrA) and a diheme cytochrome c (QcrC) subunit. The cofactor is [2Fe-2S] cluster.

It is found in the cell membrane. Functionally, iron-sulfur subunit of the cytochrome bc1 complex, an essential component of the respiratory electron transport chain required for ATP synthesis. The bc1 complex catalyzes the oxidation of menaquinol and the reduction of cytochrome c in the respiratory chain. The bc1 complex operates through a Q-cycle mechanism that couples electron transfer to generation of the proton gradient that drives ATP synthesis. The chain is Cytochrome bc1 complex Rieske iron-sulfur subunit (qcrA) from Streptomyces lividans.